A 144-amino-acid chain; its full sequence is L-fucose mutarotase (144 aa).

The active-site Proton donor is the His22. Substrate-binding positions include Asp30, Arg109, and Tyr131–Asn133.

It belongs to the RbsD / FucU family. FucU mutarotase subfamily. Homodecamer.

Its subcellular location is the cytoplasm. It carries out the reaction alpha-L-fucose = beta-L-fucose. Its pathway is carbohydrate metabolism; L-fucose metabolism. In terms of biological role, involved in the anomeric conversion of L-fucose. This Histophilus somni (strain 2336) (Haemophilus somnus) protein is L-fucose mutarotase.